We begin with the raw amino-acid sequence, 471 residues long: Tryptophanase (471 aa).

N6-acetyllysine is present on residues lysine 5, lysine 115, and lysine 156. At lysine 270 the chain carries N6-(pyridoxal phosphate)lysine. Position 450 is an N6-acetyllysine (lysine 450).

Belongs to the beta-eliminating lyase family. As to quaternary structure, homotetramer. The cofactor is pyridoxal 5'-phosphate.

The catalysed reaction is L-tryptophan + H2O = indole + pyruvate + NH4(+). Its pathway is amino-acid degradation; L-tryptophan degradation via pyruvate pathway; indole and pyruvate from L-tryptophan: step 1/1. This chain is Tryptophanase, found in Escherichia coli O9:H4 (strain HS).